A 260-amino-acid chain; its full sequence is Triosephosphate isomerase (260 aa).

11–13 contacts substrate; the sequence is NWK. H103 acts as the Electrophile in catalysis. The active-site Proton acceptor is E175. Substrate contacts are provided by residues G181, S220, and 241–242; that span reads GG.

Belongs to the triosephosphate isomerase family. In terms of assembly, homodimer.

It is found in the cytoplasm. The enzyme catalyses D-glyceraldehyde 3-phosphate = dihydroxyacetone phosphate. It functions in the pathway carbohydrate biosynthesis; gluconeogenesis. Its pathway is carbohydrate degradation; glycolysis; D-glyceraldehyde 3-phosphate from glycerone phosphate: step 1/1. Involved in the gluconeogenesis. Catalyzes stereospecifically the conversion of dihydroxyacetone phosphate (DHAP) to D-glyceraldehyde-3-phosphate (G3P). In Shewanella sp. (strain MR-4), this protein is Triosephosphate isomerase.